Reading from the N-terminus, the 360-residue chain is Phospho-N-acetylmuramoyl-pentapeptide-transferase (360 aa).

The next 10 membrane-spanning stretches (helical) occupy residues Ala-26–Glu-46, Met-74–Gly-94, Tyr-97–Tyr-117, Tyr-134–Asn-154, Val-168–Ser-188, Gly-199–Ser-219, Ser-236–Phe-256, Val-263–Leu-283, Ile-288–Val-308, and Val-338–Lys-358.

Belongs to the glycosyltransferase 4 family. MraY subfamily. Mg(2+) serves as cofactor.

The protein localises to the cell inner membrane. The catalysed reaction is UDP-N-acetyl-alpha-D-muramoyl-L-alanyl-gamma-D-glutamyl-meso-2,6-diaminopimeloyl-D-alanyl-D-alanine + di-trans,octa-cis-undecaprenyl phosphate = di-trans,octa-cis-undecaprenyl diphospho-N-acetyl-alpha-D-muramoyl-L-alanyl-D-glutamyl-meso-2,6-diaminopimeloyl-D-alanyl-D-alanine + UMP. Its pathway is cell wall biogenesis; peptidoglycan biosynthesis. Catalyzes the initial step of the lipid cycle reactions in the biosynthesis of the cell wall peptidoglycan: transfers peptidoglycan precursor phospho-MurNAc-pentapeptide from UDP-MurNAc-pentapeptide onto the lipid carrier undecaprenyl phosphate, yielding undecaprenyl-pyrophosphoryl-MurNAc-pentapeptide, known as lipid I. The chain is Phospho-N-acetylmuramoyl-pentapeptide-transferase from Shewanella putrefaciens (strain CN-32 / ATCC BAA-453).